The primary structure comprises 286 residues: UPF0725 protein At2g20620 (286 aa).

The disordered stretch occupies residues 1–49 (MVLETPVCSPIDKESSSDDVQLNKPPKKKRKLDVVYPPRDNTSSSSDVK).

The protein belongs to the UPF0725 (EMB2204) family.

The sequence is that of UPF0725 protein At2g20620 from Arabidopsis thaliana (Mouse-ear cress).